The sequence spans 40 residues: Esterase-4 (40 aa).

It belongs to the type-B carboxylesterase/lipase family.

It carries out the reaction a carboxylic ester + H2O = an alcohol + a carboxylate + H(+). This is Esterase-4 (Est-4) from Drosophila mojavensis (Fruit fly).